The primary structure comprises 285 residues: Bifunctional protein FolD (285 aa).

Residues 166 to 168 (GAS) and I232 each bind NADP(+).

This sequence belongs to the tetrahydrofolate dehydrogenase/cyclohydrolase family. In terms of assembly, homodimer.

It catalyses the reaction (6R)-5,10-methylene-5,6,7,8-tetrahydrofolate + NADP(+) = (6R)-5,10-methenyltetrahydrofolate + NADPH. The catalysed reaction is (6R)-5,10-methenyltetrahydrofolate + H2O = (6R)-10-formyltetrahydrofolate + H(+). The protein operates within one-carbon metabolism; tetrahydrofolate interconversion. Catalyzes the oxidation of 5,10-methylenetetrahydrofolate to 5,10-methenyltetrahydrofolate and then the hydrolysis of 5,10-methenyltetrahydrofolate to 10-formyltetrahydrofolate. This chain is Bifunctional protein FolD, found in Baumannia cicadellinicola subsp. Homalodisca coagulata.